The primary structure comprises 171 residues: Probable chorismate pyruvate-lyase (171 aa).

Positions 36, 78, 116, and 157 each coordinate substrate.

It belongs to the UbiC family.

It localises to the cytoplasm. The enzyme catalyses chorismate = 4-hydroxybenzoate + pyruvate. It participates in cofactor biosynthesis; ubiquinone biosynthesis. Removes the pyruvyl group from chorismate, with concomitant aromatization of the ring, to provide 4-hydroxybenzoate (4HB) for the ubiquinone pathway. The protein is Probable chorismate pyruvate-lyase of Bartonella henselae (strain ATCC 49882 / DSM 28221 / CCUG 30454 / Houston 1) (Rochalimaea henselae).